We begin with the raw amino-acid sequence, 486 residues long: MPLHLYNTLSRRLEPFSPLHPERVTIYACGVTVYDYCHLGHARSYVAWDVLRRYLTFLGYTVHYVQNFTDIDDKILRRAYENGETMATVSDRYIAAYHQDMAALNILPASAYPRATEVIPEIINLIQGLLDRGYAYVAGGDVYYAVAQFPSYGKLSGRQLEQLMAGASGRIEEEEEQRKRHPLDFALWKAAKPEEMSVYHPWEAPWGKGRPGWHIECSAMVRQAFGATVDIHCGGMDLIFPHHENEIAQSEAVTQQPLARFWLHNGFVTVNTEKMSKSLGNFTTIRDLLAQGLDPMALRLLVLQAQYRKPLDFTPEALTAAAKGWQTLGEALHLHQQIPLPPIDAAEVRSHPKTEAFCQAMDEDLNTAAALAVIFELAKTLNREQHRYLHGGGWGRSPAEVSRDWHTLVTLAQVLGLEAKEESNPALTVELTDEEIQALIAARTAARQAKNYTESDRLRDLLLAQGVKLVDQKDGTTHWFRVPSAP.

Zn(2+) is bound at residue cysteine 29. The 'HIGH' region signature appears at 31–41 (VTVYDYCHLGH). The Zn(2+) site is built by cysteine 217, histidine 242, and glutamate 246. Positions 274 to 278 (KMSKS) match the 'KMSKS' region motif. Lysine 277 contacts ATP.

Belongs to the class-I aminoacyl-tRNA synthetase family. Monomer. Zn(2+) is required as a cofactor.

It is found in the cytoplasm. The catalysed reaction is tRNA(Cys) + L-cysteine + ATP = L-cysteinyl-tRNA(Cys) + AMP + diphosphate. The protein is Cysteine--tRNA ligase of Thermosynechococcus vestitus (strain NIES-2133 / IAM M-273 / BP-1).